The sequence spans 239 residues: Serine protease SplF (239 aa).

The signal sequence occupies residues 1 to 36 (MNKNIIIKSIAALTILTSITGVGTTVVDGIQQTAKA). Active-site charge relay system residues include His-75, Asp-114, and Ser-192.

This sequence belongs to the peptidase S1B family.

The protein localises to the secreted. The polypeptide is Serine protease SplF (splF) (Staphylococcus aureus (strain MSSA476)).